Consider the following 375-residue polypeptide: Deoxyribonuclease-2 (375 aa).

An N-terminal signal peptide occupies residues 1–21 (MGLSPAAVLIFLLLGVSQTYA). Asparagine 131 carries N-linked (GlcNAc...) asparagine glycosylation.

It belongs to the DNase II family.

It catalyses the reaction Endonucleolytic cleavage to nucleoside 3'-phosphates and 3'-phosphooligonucleotide end-products.. Functionally, hydrolyzes DNA under acidic conditions with a preference for double-stranded DNA. Implicated in apoptosis. The polypeptide is Deoxyribonuclease-2 (nuc-1) (Caenorhabditis elegans).